Here is a 67-residue protein sequence, read N- to C-terminus: UPF0337 protein msl9551 (67 aa).

This sequence belongs to the UPF0337 (CsbD) family.

The polypeptide is UPF0337 protein msl9551 (Mesorhizobium japonicum (strain LMG 29417 / CECT 9101 / MAFF 303099) (Mesorhizobium loti (strain MAFF 303099))).